We begin with the raw amino-acid sequence, 93 residues long: Co-chaperonin GroES (93 aa).

The protein belongs to the GroES chaperonin family. As to quaternary structure, heptamer of 7 subunits arranged in a ring. Interacts with the chaperonin GroEL.

The protein localises to the cytoplasm. In terms of biological role, together with the chaperonin GroEL, plays an essential role in assisting protein folding. The GroEL-GroES system forms a nano-cage that allows encapsulation of the non-native substrate proteins and provides a physical environment optimized to promote and accelerate protein folding. GroES binds to the apical surface of the GroEL ring, thereby capping the opening of the GroEL channel. In Lacticaseibacillus paracasei (strain ATCC 334 / BCRC 17002 / CCUG 31169 / CIP 107868 / KCTC 3260 / NRRL B-441) (Lactobacillus paracasei), this protein is Co-chaperonin GroES.